We begin with the raw amino-acid sequence, 119 residues long: Holo-[acyl-carrier-protein] synthase (119 aa).

Residues D5 and E51 each contribute to the Mg(2+) site.

It belongs to the P-Pant transferase superfamily. AcpS family. Mg(2+) serves as cofactor.

The protein localises to the cytoplasm. The catalysed reaction is apo-[ACP] + CoA = holo-[ACP] + adenosine 3',5'-bisphosphate + H(+). In terms of biological role, transfers the 4'-phosphopantetheine moiety from coenzyme A to a Ser of acyl-carrier-protein. This is Holo-[acyl-carrier-protein] synthase from Helicobacter pylori (strain ATCC 700392 / 26695) (Campylobacter pylori).